We begin with the raw amino-acid sequence, 414 residues long: Gamma-glutamyl phosphate reductase (414 aa).

Belongs to the gamma-glutamyl phosphate reductase family.

It is found in the cytoplasm. It catalyses the reaction L-glutamate 5-semialdehyde + phosphate + NADP(+) = L-glutamyl 5-phosphate + NADPH + H(+). Its pathway is amino-acid biosynthesis; L-proline biosynthesis; L-glutamate 5-semialdehyde from L-glutamate: step 2/2. Catalyzes the NADPH-dependent reduction of L-glutamate 5-phosphate into L-glutamate 5-semialdehyde and phosphate. The product spontaneously undergoes cyclization to form 1-pyrroline-5-carboxylate. The chain is Gamma-glutamyl phosphate reductase from Xanthomonas oryzae pv. oryzae (strain KACC10331 / KXO85).